Here is a 108-residue protein sequence, read N- to C-terminus: DNA-directed RNA polymerase subunit omega (108 aa).

This sequence belongs to the RNA polymerase subunit omega family. The RNAP catalytic core consists of 2 alpha, 1 beta, 1 beta' and 1 omega subunit. When a sigma factor is associated with the core the holoenzyme is formed, which can initiate transcription.

The catalysed reaction is RNA(n) + a ribonucleoside 5'-triphosphate = RNA(n+1) + diphosphate. Promotes RNA polymerase assembly. Latches the N- and C-terminal regions of the beta' subunit thereby facilitating its interaction with the beta and alpha subunits. In Mycolicibacterium paratuberculosis (strain ATCC BAA-968 / K-10) (Mycobacterium paratuberculosis), this protein is DNA-directed RNA polymerase subunit omega.